Reading from the N-terminus, the 368-residue chain is P2X receptor C (368 aa).

Residues 1–24 (MLDWDSILAYNTIKVVRIRDRRLG) are Cytoplasmic-facing. Residues 25 to 45 (ILHLIFMIAIISYVVIYSAII) form a helical membrane-spanning segment. The Lumenal portion of the chain corresponds to 46-368 (KKGYLSIEEP…DKLYHNIEAL (323 aa)). A pore-forming motif region spans residues 282-295 (RHAIRLIFIQTGVI).

It belongs to the P2X receptor family.

It localises to the contractile vacuole membrane. Its function is as follows. P2X receptors are ligand-gated ion channels that play a role in intracellular calcium signaling. ATP does not evoke inward currents in p2xC. Not essential for osmoregulation. The protein is P2X receptor C (p2xC) of Dictyostelium discoideum (Social amoeba).